The chain runs to 536 residues: MGCVHCKEKISGKGQGGSGTGTPAHPPSQYDPDPTQLSGAFTHIPDFNNFHAAAVSPPVPFSGPGFYPCNTLQAHSSITGGGVTLFIALYDYEARTEDDLSFQKGEKFHIINNTEGDWWEARSLSSGATGYIPSNYVAPVDSIQAEEWYFGKIGRKDAERQLLCHGNCRGTFLIRESETTKGAYSLSIRDWDEAKGDHVKHYKIRKLDSGGYYITTRAQFDTIQQLVQHYIERAAGLCCRLAVPCPKGTPKLADLSVKTKDVWEIPRESLQLLQKLGNGQFGEVWMGTWNGTTKVAVKTLKPGTMSPEAFLEEAQIMKRLRHDKLVQLYAVVSEEPIYIVTEFMSQGSLLDFLKDGDGRYLKLPQLVDMAAQIAAGMAYIERMNYIHRDLRAANILVGDNLVCKIADFGLARLIEDNEYTARQGAKFPIKWTAPEAALFGKFTIKSDVWSFGILLTELVTKGRVPYPGMNNREVLEQVERGYRMQCPGGCPPSLHDVMVQCWKREPEERPTFEYLQSFLEDYFTATEPQYQPGDNQ.

The N-myristoyl glycine moiety is linked to residue Gly2. 2 S-palmitoyl cysteine lipidation sites follow: Cys3 and Cys6. The tract at residues 10 to 36 (ISGKGQGGSGTGTPAHPPSQYDPDPTQ) is disordered. The SH3 domain maps to 81 to 142 (GGVTLFIALY…PSNYVAPVDS (62 aa)). Positions 148 to 245 (WYFGKIGRKD…GLCCRLAVPC (98 aa)) constitute an SH2 domain. The 254-residue stretch at 270 to 523 (LQLLQKLGNG…YLQSFLEDYF (254 aa)) folds into the Protein kinase domain. ATP-binding positions include 276-284 (LGNGQFGEV) and Lys298. Asp389 acts as the Proton acceptor in catalysis. Tyr419 is modified (phosphotyrosine; by autocatalysis). Tyr530 carries the post-translational modification Phosphotyrosine.

Belongs to the protein kinase superfamily. Tyr protein kinase family. SRC subfamily. In terms of processing, phosphorylated. There are elevated levels of this protein in neural and hematopoietic tissues.

It carries out the reaction L-tyrosyl-[protein] + ATP = O-phospho-L-tyrosyl-[protein] + ADP + H(+). Functionally, may participate in signaling pathways. In Gallus gallus (Chicken), this protein is Proto-oncogene tyrosine-protein kinase Yrk (YRK).